The following is a 270-amino-acid chain: Putative phosphoenolpyruvate synthase regulatory protein (270 aa).

150–157 (GVSRCGKT) is a binding site for ADP.

It belongs to the pyruvate, phosphate/water dikinase regulatory protein family. PSRP subfamily.

The catalysed reaction is [pyruvate, water dikinase] + ADP = [pyruvate, water dikinase]-phosphate + AMP + H(+). It carries out the reaction [pyruvate, water dikinase]-phosphate + phosphate + H(+) = [pyruvate, water dikinase] + diphosphate. Bifunctional serine/threonine kinase and phosphorylase involved in the regulation of the phosphoenolpyruvate synthase (PEPS) by catalyzing its phosphorylation/dephosphorylation. This chain is Putative phosphoenolpyruvate synthase regulatory protein, found in Shewanella putrefaciens (strain CN-32 / ATCC BAA-453).